The primary structure comprises 461 residues: UPF0210 protein Ddes_0622 (461 aa).

It belongs to the UPF0210 family. In terms of assembly, homodimer.

This Desulfovibrio desulfuricans (strain ATCC 27774 / DSM 6949 / MB) protein is UPF0210 protein Ddes_0622.